A 210-amino-acid chain; its full sequence is Thioredoxin-like 3-1, chloroplastic (210 aa).

Residues 81–210 (WRLKAFWSNI…EVRELINKFV (130 aa)) enclose the Thioredoxin domain. Active-site nucleophile residues include cysteine 130 and cysteine 133. Cysteine 130 and cysteine 133 are joined by a disulfide.

The protein belongs to the thioredoxin family.

The protein resides in the plastid. Its subcellular location is the chloroplast stroma. In terms of biological role, probable thiol-disulfide oxidoreductase that may participate in various redox reactions. This is Thioredoxin-like 3-1, chloroplastic (WCRKC1) from Arabidopsis thaliana (Mouse-ear cress).